We begin with the raw amino-acid sequence, 382 residues long: Galactokinase (382 aa).

34–37 (EHTD) is a binding site for substrate. 124–130 (GAGLSSS) is a binding site for ATP. Positions 130 and 162 each coordinate Mg(2+). Asp174 serves as the catalytic Proton acceptor. Tyr223 lines the substrate pocket.

The protein belongs to the GHMP kinase family. GalK subfamily.

The protein resides in the cytoplasm. It carries out the reaction alpha-D-galactose + ATP = alpha-D-galactose 1-phosphate + ADP + H(+). The protein operates within carbohydrate metabolism; galactose metabolism. Its function is as follows. Catalyzes the transfer of the gamma-phosphate of ATP to D-galactose to form alpha-D-galactose-1-phosphate (Gal-1-P). The chain is Galactokinase from Aeromonas hydrophila subsp. hydrophila (strain ATCC 7966 / DSM 30187 / BCRC 13018 / CCUG 14551 / JCM 1027 / KCTC 2358 / NCIMB 9240 / NCTC 8049).